The chain runs to 560 residues: Thermosome subunit 1 (560 aa).

The disordered stretch occupies residues 525–550 (LSGGQTGSDDDDGGAPGGMGGGMGGM). A compositionally biased stretch (gly residues) spans 538-550 (GAPGGMGGGMGGM).

The protein belongs to the TCP-1 chaperonin family. In terms of assembly, the thermosome or CCT complex is a oligomeric complex of two octameric double-ring structures; the complex is probably a heterooligomer of CCT1, CCT2 and CCT3 with yet unknown stoichiometry.

In terms of biological role, molecular chaperone that assists in the folding or refolding of nascent or denatured proteins along with ATP hydrolysis. ATPase activity is highest in thermosome assemblies containing CCT1:CCT2, followed by assemblies containing CCT1:CCT2:CCT3. Required for thermosome ATPase activity. Not required for growth. The sequence is that of Thermosome subunit 1 (cct1) from Haloferax volcanii (strain ATCC 29605 / DSM 3757 / JCM 8879 / NBRC 14742 / NCIMB 2012 / VKM B-1768 / DS2) (Halobacterium volcanii).